We begin with the raw amino-acid sequence, 510 residues long: Light-independent protochlorophyllide reductase subunit B (510 aa).

Asp-36 is a [4Fe-4S] cluster binding site. Residue Asp-296 is the Proton donor of the active site. 431–432 lines the substrate pocket; that stretch reads GM.

The protein belongs to the ChlB/BchB/BchZ family. In terms of assembly, protochlorophyllide reductase is composed of three subunits; ChlL, ChlN and ChlB. Forms a heterotetramer of two ChlB and two ChlN subunits. It depends on [4Fe-4S] cluster as a cofactor.

It is found in the plastid. The protein resides in the chloroplast. The catalysed reaction is chlorophyllide a + oxidized 2[4Fe-4S]-[ferredoxin] + 2 ADP + 2 phosphate = protochlorophyllide a + reduced 2[4Fe-4S]-[ferredoxin] + 2 ATP + 2 H2O. It functions in the pathway porphyrin-containing compound metabolism; chlorophyll biosynthesis (light-independent). Functionally, component of the dark-operative protochlorophyllide reductase (DPOR) that uses Mg-ATP and reduced ferredoxin to reduce ring D of protochlorophyllide (Pchlide) to form chlorophyllide a (Chlide). This reaction is light-independent. The NB-protein (ChlN-ChlB) is the catalytic component of the complex. The polypeptide is Light-independent protochlorophyllide reductase subunit B (Auxenochlorella protothecoides (Green microalga)).